The following is a 401-amino-acid chain: Chalcone synthase 2 (401 aa).

Residue Cys168 is part of the active site.

It belongs to the thiolase-like superfamily. Chalcone/stilbene synthases family.

The enzyme catalyses (E)-4-coumaroyl-CoA + 3 malonyl-CoA + 3 H(+) = 2',4,4',6'-tetrahydroxychalcone + 3 CO2 + 4 CoA. Its pathway is secondary metabolite biosynthesis; flavonoid biosynthesis. In terms of biological role, the primary product of this enzyme is 4,2',4',6'-tetrahydroxychalcone (also termed naringenin-chalcone or chalcone) which can under specific conditions spontaneously isomerize into naringenin. This chain is Chalcone synthase 2 (CHS2), found in Sorghum bicolor (Sorghum).